Consider the following 369-residue polypeptide: MARTTDDSKKAAPAAGTADEAQKQKALKMVLTQIKRNFGEGAIMRLGENTRIRVETVPSGAITLDLALGGGLPRGRVIEIYGPESSGKTTLALHAIAEIQKTGGVAAFVDAEHALDPAYAKVLGVNVDDLIISQPDTGEMAMEIVDQLVRSAAIDVIVIDSVAALVPRAEIEGEMGDAHVGLQARLMSQALRKITGNIGKTGCMVIFLNQLRSKIGVMYGNPETTTGGNALKFYASVRLDIRKAETLKKGQDEYGNRVRVKVVKNKVAPPFRKAEFDIIFGKGISSLGCILDLAVEMEIVERKGAWYSYGSERLGQGRENVLALLEENAAQAQEIEIKVREKIASGAAVPAAAVAAPDEGDDDLGDEEV.

Residues 1–10 (MARTTDDSKK) are compositionally biased toward basic and acidic residues. Residues 1-20 (MARTTDDSKKAAPAAGTADE) are disordered. Residue 82–89 (GPESSGKT) coordinates ATP. Residues 350–369 (PAAAVAAPDEGDDDLGDEEV) are disordered. Positions 358-369 (DEGDDDLGDEEV) are enriched in acidic residues.

The protein belongs to the RecA family.

The protein localises to the cytoplasm. Its function is as follows. Can catalyze the hydrolysis of ATP in the presence of single-stranded DNA, the ATP-dependent uptake of single-stranded DNA by duplex DNA, and the ATP-dependent hybridization of homologous single-stranded DNAs. It interacts with LexA causing its activation and leading to its autocatalytic cleavage. The chain is Protein RecA from Gloeobacter violaceus (strain ATCC 29082 / PCC 7421).